The following is a 314-amino-acid chain: Periplasmic [NiFe] hydrogenase small subunit (314 aa).

The segment at residues 1 to 49 (MNFSVGLGRDDAEKRLVQNGVSRRDFMKFCATVAAAMGMGPAFAPKVAE) is a signal peptide (tat-type signal). [4Fe-4S] cluster is bound by residues Cys-67, Cys-70, Cys-164, Cys-197, His-234, Cys-237, Cys-262, and Cys-268. Residues Cys-277, Cys-295, and Cys-298 each contribute to the [3Fe-4S] cluster site.

The protein belongs to the [NiFe]/[NiFeSe] hydrogenase small subunit family. As to quaternary structure, heterodimer of a large and a small subunit. The cofactor is [4Fe-4S] cluster. [3Fe-4S] cluster serves as cofactor. Post-translationally, predicted to be exported by the Tat system. The position of the signal peptide cleavage has been experimentally proven.

It localises to the periplasm. It catalyses the reaction 2 Fe(III)-[cytochrome c3] + H2 = 2 Fe(II)-[cytochrome c3] + 2 H(+). Involved in hydrogen uptake for the anaerobic reduction of sulfate to hydrogen sulfide in an electron transport chain. Cytochrome c3 is the physiological electron acceptor. The chain is Periplasmic [NiFe] hydrogenase small subunit (hydA) from Solidesulfovibrio fructosivorans (Desulfovibrio fructosivorans).